The chain runs to 451 residues: Phosphoglucosamine mutase (451 aa).

Ser107 acts as the Phosphoserine intermediate in catalysis. Mg(2+)-binding residues include Ser107, Asp246, Asp248, and Asp250. Ser107 carries the post-translational modification Phosphoserine.

This sequence belongs to the phosphohexose mutase family. Mg(2+) serves as cofactor. Activated by phosphorylation.

The catalysed reaction is alpha-D-glucosamine 1-phosphate = D-glucosamine 6-phosphate. Its function is as follows. Catalyzes the conversion of glucosamine-6-phosphate to glucosamine-1-phosphate. In Burkholderia cenocepacia (strain ATCC BAA-245 / DSM 16553 / LMG 16656 / NCTC 13227 / J2315 / CF5610) (Burkholderia cepacia (strain J2315)), this protein is Phosphoglucosamine mutase.